The sequence spans 638 residues: Phosphomethylpyrimidine synthase (638 aa).

Residues N243, M272, Y301, H337, 357–359, 398–401, and E437 each bind substrate; these read SRG and DGLR. H441 serves as a coordination point for Zn(2+). Y464 contacts substrate. H505 contributes to the Zn(2+) binding site. Positions 585, 588, and 593 each coordinate [4Fe-4S] cluster.

The protein belongs to the ThiC family. In terms of assembly, homodimer. [4Fe-4S] cluster serves as cofactor.

The enzyme catalyses 5-amino-1-(5-phospho-beta-D-ribosyl)imidazole + S-adenosyl-L-methionine = 4-amino-2-methyl-5-(phosphooxymethyl)pyrimidine + CO + 5'-deoxyadenosine + formate + L-methionine + 3 H(+). The protein operates within cofactor biosynthesis; thiamine diphosphate biosynthesis. Catalyzes the synthesis of the hydroxymethylpyrimidine phosphate (HMP-P) moiety of thiamine from aminoimidazole ribotide (AIR) in a radical S-adenosyl-L-methionine (SAM)-dependent reaction. This Azoarcus sp. (strain BH72) protein is Phosphomethylpyrimidine synthase.